A 294-amino-acid chain; its full sequence is 2-dehydro-3-deoxy-phosphogluconate/2-dehydro-3-deoxy-6-phosphogalactonate aldolase (294 aa).

Residues 43 to 44, 130 to 132, and 155 to 157 contribute to the substrate site; these read TT, YNY, and KDT. Catalysis depends on Lys-155, which acts as the Schiff-base intermediate with substrate.

This sequence belongs to the DapA family. KDPG aldolase subfamily. As to quaternary structure, homotetramer; dimer of dimers.

The catalysed reaction is 2-dehydro-3-deoxy-6-phospho-D-gluconate = D-glyceraldehyde 3-phosphate + pyruvate. It carries out the reaction 2-dehydro-3-deoxy-6-phospho-D-galactonate = D-glyceraldehyde 3-phosphate + pyruvate. It participates in carbohydrate acid metabolism; 2-dehydro-3-deoxy-D-gluconate degradation; D-glyceraldehyde 3-phosphate and pyruvate from 2-dehydro-3-deoxy-D-gluconate: step 2/2. Involved in the degradation of glucose and galactose via the Entner-Doudoroff pathway. Catalyzes the reversible cleavage of 2-keto-3-deoxy-6-phosphogluconate (KDPG) and 2-keto-3-deoxygluconate (KDG) forming pyruvate and glyceraldehyde 3-phosphate or glyceraldehyde, respectively. It is also able to catalyze the reversible cleavage of 2-keto-3-deoxy-6-phosphogalactonate (KDPGal) and 2-keto-3-deoxygalactonate (KDGal). It is equally active with both D- and L-glyceraldehyde. The chain is 2-dehydro-3-deoxy-phosphogluconate/2-dehydro-3-deoxy-6-phosphogalactonate aldolase from Saccharolobus solfataricus (Sulfolobus solfataricus).